A 38-amino-acid polypeptide reads, in one-letter code: Beta-galactosidase (38 aa).

It belongs to the glycosyl hydrolase 35 family. In terms of assembly, heterodimer of a large and a small subunit. In terms of processing, the small subunit is N-glycosylated.

The enzyme catalyses Hydrolysis of terminal non-reducing beta-D-galactose residues in beta-D-galactosides.. In terms of biological role, involved in cell wall degradation. Degrades polysaccharides containing beta-(1--&gt;4)-linked galactans, acting as an exo-(1--&gt;4)-beta-D-galactanase. In Hordeum vulgare (Barley), this protein is Beta-galactosidase.